We begin with the raw amino-acid sequence, 68 residues long: Venom-like beta-defensin (68 aa).

Positions 1–24 are cleaved as a signal peptide; sequence MRLLILFLAVVTLLSLAGPGSAEV. 3 disulfides stabilise this stretch: Cys33–Cys60, Cys40–Cys54, and Cys47–Cys61.

As to expression, highly expressed in intestine, liver and spleen and expressed at lower levels in brain, kidney, lung, testis and venom gland.

It is found in the secreted. In terms of biological role, potent antimicrobial peptide that displays activity against S.aureus and P.aeruginosa. Does not inhibit growth of E.coli. The polypeptide is Venom-like beta-defensin (Ornithorhynchus anatinus (Duckbill platypus)).